The following is a 105-amino-acid chain: Plastocyanin (105 aa).

One can recognise a Plastocyanin-like domain in the interval 1 to 105 (ETYTVKLGSD…GMVGKITVAG (105 aa)). Residues histidine 39, cysteine 89, histidine 92, and methionine 97 each coordinate Cu(2+).

It belongs to the plastocyanin family. The cofactor is Cu(2+).

Its subcellular location is the cellular thylakoid membrane. Its function is as follows. Participates in electron transfer between P700 and the cytochrome b6-f complex in photosystem I. The chain is Plastocyanin (petE) from Anabaena variabilis.